A 913-amino-acid polypeptide reads, in one-letter code: Translation initiation factor IF-2 (913 aa).

The tract at residues 1-322 (MTDNNDDKTL…QEKFRRSQMQ (322 aa)) is disordered. Over residues 60–113 (VQPVVAAPKPAAPAPVAARPQAPQPRIHQPGGQQQRPGSSQSQQRSGSSAPQQR) the composition is skewed to low complexity. A compositionally biased stretch (basic and acidic residues) spans 131-180 (MEARRRALMEAQARDVVEAKQRAEDEARRKVEEEQRIAAEKMEAANRAAE). 3 stretches are compositionally biased toward low complexity: residues 181-195 (EAAA…PAAE), 203-238 (ERPA…AAAP), and 261-277 (PARG…PAAR). In terms of domain architecture, tr-type G spans 411–578 (SRPPVVTIMG…AILLQAEILD (168 aa)). The G1 stretch occupies residues 420–427 (GHVDHGKT). Residue 420 to 427 (GHVDHGKT) participates in GTP binding. The interval 445 to 449 (GITQH) is G2. Positions 466 to 469 (DTPG) are G3. GTP-binding positions include 466-470 (DTPGH) and 520-523 (NKID). The tract at residues 520 to 523 (NKID) is G4. Residues 556–558 (SAK) are G5.

This sequence belongs to the TRAFAC class translation factor GTPase superfamily. Classic translation factor GTPase family. IF-2 subfamily.

It is found in the cytoplasm. Functionally, one of the essential components for the initiation of protein synthesis. Protects formylmethionyl-tRNA from spontaneous hydrolysis and promotes its binding to the 30S ribosomal subunits. Also involved in the hydrolysis of GTP during the formation of the 70S ribosomal complex. The polypeptide is Translation initiation factor IF-2 (Agrobacterium fabrum (strain C58 / ATCC 33970) (Agrobacterium tumefaciens (strain C58))).